The sequence spans 164 residues: MAMSHVQPMLLLLVSLFFLPALRGAIDFEYCAKNGNDYGTVTSIVVSPSVGPHENPTITINLFGSASKNIPAGTLVYVAFRDGEFTGLLKTYNLCDVSACNNEAEIEAGTNFELTLSDVLYVGYDEEIKYSVSLRRKTLEEEDPIIKMCVDFKVPAPAPAFVSI.

Residues 1–24 (MAMSHVQPMLLLLVSLFFLPALRG) form the signal peptide.

In terms of assembly, interacts with RUB1/NEDD8. Post-translationally, neddylated. In terms of processing, ubiquitinated.

The protein localises to the vacuole. It localises to the endoplasmic reticulum. Its function is as follows. May be involved in herbivory-mediated responses. May play a role in herbivory-associated molecular pattern (HAMP) recognition. May function is jasmonate (JA) signaling in response to HAMP. May play a role in defense response against the pathogens Altenaria brassicicola and Pseudomonas syringae. The polypeptide is MD-2-related lipid-recognition protein 3 (Arabidopsis thaliana (Mouse-ear cress)).